A 257-amino-acid chain; its full sequence is Dihydroorotate dehydrogenase B (NAD(+)), electron transfer subunit (257 aa).

Positions 2-102 (IGRERMTVAS…LGPLGNGFPL (101 aa)) constitute an FAD-binding FR-type domain. FAD is bound by residues 53–56 (RPLS), 70–72 (IYR), and 77–78 (GT). Cys-221, Cys-226, Cys-229, and Cys-244 together coordinate [2Fe-2S] cluster.

The protein belongs to the PyrK family. In terms of assembly, heterotetramer of 2 PyrK and 2 PyrD type B subunits. [2Fe-2S] cluster is required as a cofactor. It depends on FAD as a cofactor.

Its pathway is pyrimidine metabolism; UMP biosynthesis via de novo pathway; orotate from (S)-dihydroorotate (NAD(+) route): step 1/1. In terms of biological role, responsible for channeling the electrons from the oxidation of dihydroorotate from the FMN redox center in the PyrD type B subunit to the ultimate electron acceptor NAD(+). The chain is Dihydroorotate dehydrogenase B (NAD(+)), electron transfer subunit from Geobacillus kaustophilus (strain HTA426).